We begin with the raw amino-acid sequence, 280 residues long: Undecaprenyl-diphosphatase (280 aa).

The next 7 membrane-spanning stretches (helical) occupy residues 1–21, 45–65, 90–110, 115–135, 151–171, 226–246, and 260–280; these read MTLLQALILAIVQGITEPFPV, FLPFLTMLHVGTLVALAGVFW, IFGLLVIATIPAVLVGWLLEH, VFGTPLAVAGFLILNGFLLMV, IATLAPKDAVIIGIWQCLALL, IMVQCVAGAVVAGLTALICSL, and LTPFGVYCVLAGLFAGAVILL.

It belongs to the UppP family.

The protein localises to the cell inner membrane. It catalyses the reaction di-trans,octa-cis-undecaprenyl diphosphate + H2O = di-trans,octa-cis-undecaprenyl phosphate + phosphate + H(+). Functionally, catalyzes the dephosphorylation of undecaprenyl diphosphate (UPP). Confers resistance to bacitracin. In Gluconobacter oxydans (strain 621H) (Gluconobacter suboxydans), this protein is Undecaprenyl-diphosphatase.